The sequence spans 524 residues: M phase phosphoprotein 10 (524 aa).

Positions 85-92 match the Nuclear localization signal 1 motif; the sequence is VKRFAKNP. Disordered stretches follow at residues 100–243 and 259–283; these read KLAL…KLGK and KLKDLSEDEEAEIENKGNEKLSTHE. Residues 109–168 show a composition bias toward acidic residues; the sequence is DDIDEMDMDGFDSDDVDDEDKEIESNDSEGEDEEEEEEDEEEEEEEEEEEEEEKDGDNEG. Residues 131–165 adopt a coiled-coil conformation; the sequence is IESNDSEGEDEEEEEEDEEEEEEEEEEEEEEKDGD. Over residues 169–180 the composition is skewed to basic and acidic residues; sequence IEDKFFKIKELE. Over residues 181–191 the composition is skewed to acidic residues; that stretch reads EFLEEGEAEEY. Basic residues predominate over residues 196–207; sequence KNKKGVAQRKKQ. Residues 210 to 238 show a composition bias toward acidic residues; that stretch reads SDDEDEEDDDDEEEDVEFDAFAGGDDEET. Residues 257-302 are a coiled coil; it reads KMKLKDLSEDEEAEIENKGNEKLSTHERARLKLQSKIEQMEKANLD. Positions 271–283 are enriched in basic and acidic residues; it reads IENKGNEKLSTHE. Residues 373–380 carry the Nuclear localization signal 2 motif; the sequence is GKREAKEL. The interval 479-524 is disordered; that stretch reads KGDIKDESELTQEDRKRRRANKKRKFKAESANEPPKKALDTSTKNP. The span at 480 to 493 shows a compositional bias: basic and acidic residues; it reads GDIKDESELTQEDR. Over residues 494–504 the composition is skewed to basic residues; that stretch reads KRRRANKKRKF. Residues 505–517 show a composition bias toward basic and acidic residues; that stretch reads KAESANEPPKKAL.

The protein belongs to the MPP10 family. As to quaternary structure, component of the ribosomal small subunit (SSU) processome. Interacts with THAL in the nucleus.

Its subcellular location is the nucleus. It localises to the nucleolus. Involved in nucleolar processing of pre-18S ribosomal RNA. This Arabidopsis thaliana (Mouse-ear cress) protein is M phase phosphoprotein 10.